Here is a 337-residue protein sequence, read N- to C-terminus: Glyceraldehyde-3-phosphate dehydrogenase (337 aa).

NAD(+)-binding positions include 17-18 (RI), D39, K83, and S125. D-glyceraldehyde 3-phosphate-binding positions include 156 to 158 (SCT), T187, R202, 215 to 216 (TG), and R238. C157 (nucleophile) is an active-site residue. Residue N319 participates in NAD(+) binding.

The protein belongs to the glyceraldehyde-3-phosphate dehydrogenase family. Homotetramer.

It localises to the cytoplasm. It catalyses the reaction D-glyceraldehyde 3-phosphate + phosphate + NAD(+) = (2R)-3-phospho-glyceroyl phosphate + NADH + H(+). It functions in the pathway carbohydrate degradation; glycolysis; pyruvate from D-glyceraldehyde 3-phosphate: step 1/5. Its function is as follows. Catalyzes the oxidative phosphorylation of glyceraldehyde 3-phosphate (G3P) to 1,3-bisphosphoglycerate (BPG) using the cofactor NAD. The first reaction step involves the formation of a hemiacetal intermediate between G3P and a cysteine residue, and this hemiacetal intermediate is then oxidized to a thioester, with concomitant reduction of NAD to NADH. The reduced NADH is then exchanged with the second NAD, and the thioester is attacked by a nucleophilic inorganic phosphate to produce BPG. The polypeptide is Glyceraldehyde-3-phosphate dehydrogenase (gapA) (Mycoplasma pneumoniae (strain ATCC 29342 / M129 / Subtype 1) (Mycoplasmoides pneumoniae)).